The sequence spans 1430 residues: DNA-directed RNA polymerase subunit beta' (1430 aa).

Residues Cys71, Cys73, Cys86, and Cys89 each coordinate Zn(2+). Mg(2+) contacts are provided by Asp461, Asp463, and Asp465. Zn(2+)-binding residues include Cys815, Cys889, Cys896, and Cys899. The disordered stretch occupies residues 1388 to 1430 (RRQEAPAPAATPEQQAEEVFASLGQGEGEGPSPSDEASGPEVE). Over residues 1392-1405 (APAPAATPEQQAEE) the composition is skewed to low complexity.

This sequence belongs to the RNA polymerase beta' chain family. In terms of assembly, the RNAP catalytic core consists of 2 alpha, 1 beta, 1 beta' and 1 omega subunit. When a sigma factor is associated with the core the holoenzyme is formed, which can initiate transcription. Mg(2+) is required as a cofactor. The cofactor is Zn(2+).

It carries out the reaction RNA(n) + a ribonucleoside 5'-triphosphate = RNA(n+1) + diphosphate. DNA-dependent RNA polymerase catalyzes the transcription of DNA into RNA using the four ribonucleoside triphosphates as substrates. The sequence is that of DNA-directed RNA polymerase subunit beta' from Halorhodospira halophila (strain DSM 244 / SL1) (Ectothiorhodospira halophila (strain DSM 244 / SL1)).